The following is a 336-amino-acid chain: Holliday junction branch migration complex subunit RuvB (336 aa).

The segment at 1–185 is large ATPase domain (RuvB-L); sequence MSIIVERLLS…FGVLSRVEYY (185 aa). ATP contacts are provided by residues Leu-24, Arg-25, Gly-66, Lys-69, Thr-70, Thr-71, 132 to 134, Arg-175, Tyr-185, and Arg-222; that span reads EDF. Thr-70 contributes to the Mg(2+) binding site. Residues 186-256 form a small ATPAse domain (RuvB-S) region; sequence TVDQLSAIVE…ITQMALELLQ (71 aa). The head domain (RuvB-H) stretch occupies residues 259–336; the sequence is KLGLDHIDHK…EHFGMEIPKV (78 aa). DNA is bound by residues Arg-314 and Arg-319.

The protein belongs to the RuvB family. As to quaternary structure, homohexamer. Forms an RuvA(8)-RuvB(12)-Holliday junction (HJ) complex. HJ DNA is sandwiched between 2 RuvA tetramers; dsDNA enters through RuvA and exits via RuvB. An RuvB hexamer assembles on each DNA strand where it exits the tetramer. Each RuvB hexamer is contacted by two RuvA subunits (via domain III) on 2 adjacent RuvB subunits; this complex drives branch migration. In the full resolvosome a probable DNA-RuvA(4)-RuvB(12)-RuvC(2) complex forms which resolves the HJ.

Its subcellular location is the cytoplasm. The catalysed reaction is ATP + H2O = ADP + phosphate + H(+). The RuvA-RuvB-RuvC complex processes Holliday junction (HJ) DNA during genetic recombination and DNA repair, while the RuvA-RuvB complex plays an important role in the rescue of blocked DNA replication forks via replication fork reversal (RFR). RuvA specifically binds to HJ cruciform DNA, conferring on it an open structure. The RuvB hexamer acts as an ATP-dependent pump, pulling dsDNA into and through the RuvAB complex. RuvB forms 2 homohexamers on either side of HJ DNA bound by 1 or 2 RuvA tetramers; 4 subunits per hexamer contact DNA at a time. Coordinated motions by a converter formed by DNA-disengaged RuvB subunits stimulates ATP hydrolysis and nucleotide exchange. Immobilization of the converter enables RuvB to convert the ATP-contained energy into a lever motion, pulling 2 nucleotides of DNA out of the RuvA tetramer per ATP hydrolyzed, thus driving DNA branch migration. The RuvB motors rotate together with the DNA substrate, which together with the progressing nucleotide cycle form the mechanistic basis for DNA recombination by continuous HJ branch migration. Branch migration allows RuvC to scan DNA until it finds its consensus sequence, where it cleaves and resolves cruciform DNA. The protein is Holliday junction branch migration complex subunit RuvB of Bacillus cereus (strain ATCC 14579 / DSM 31 / CCUG 7414 / JCM 2152 / NBRC 15305 / NCIMB 9373 / NCTC 2599 / NRRL B-3711).